The chain runs to 1266 residues: Kinesin-like protein KIN-12G (1266 aa).

The interval 1 to 22 (MPSDCGDDDHGGGSAPAGFELQ) is disordered. Residues 32–369 (NVQVVIRVRP…LKFAQRAKYI (338 aa)) enclose the Kinesin motor domain. 113–120 (GQTGSGKT) contributes to the ATP binding site. 4 coiled-coil regions span residues 613 to 668 (MEFI…SEAV), 817 to 854 (RSEL…FKRK), 1029 to 1060 (ARES…AERV), and 1084 to 1120 (SELL…MNRH).

This sequence belongs to the TRAFAC class myosin-kinesin ATPase superfamily. Kinesin family. KIN-12 subfamily.

This chain is Kinesin-like protein KIN-12G, found in Oryza sativa subsp. japonica (Rice).